A 271-amino-acid chain; its full sequence is MPELPEVETTRRGVAPHITGRKILQVNIYEPRLRWPVPMDLPAAAQGKTVLNVTRRAKYLLINLGDDELLFHLGMSGNLRIVAPETPRMKHDHVDILLEGDITLRYNDPRRFGCLLLLNPPTQEHPLLKHLGPEPLSDQFSGELLYKRSRQRKSPVKTFLMDQAIVVGVGNIYANEALFLAGIRPTRAAGEVSLKRYQVLAEAVRKVLSDAINMGGATLRDFVGGDGKPGYFQQTLRAYGRGGQPCTVCQTELKEIKLGQRTSVFCPSCQR.

The Schiff-base intermediate with DNA role is filled by Pro2. The active-site Proton donor is Glu3. Lys58 (proton donor; for beta-elimination activity) is an active-site residue. His91, Arg110, and Arg152 together coordinate DNA. The FPG-type zinc finger occupies 237-271; it reads RAYGRGGQPCTVCQTELKEIKLGQRTSVFCPSCQR. The active-site Proton donor; for delta-elimination activity is the Arg261.

Belongs to the FPG family. In terms of assembly, monomer. Requires Zn(2+) as cofactor.

The enzyme catalyses Hydrolysis of DNA containing ring-opened 7-methylguanine residues, releasing 2,6-diamino-4-hydroxy-5-(N-methyl)formamidopyrimidine.. It carries out the reaction 2'-deoxyribonucleotide-(2'-deoxyribose 5'-phosphate)-2'-deoxyribonucleotide-DNA = a 3'-end 2'-deoxyribonucleotide-(2,3-dehydro-2,3-deoxyribose 5'-phosphate)-DNA + a 5'-end 5'-phospho-2'-deoxyribonucleoside-DNA + H(+). Functionally, involved in base excision repair of DNA damaged by oxidation or by mutagenic agents. Acts as a DNA glycosylase that recognizes and removes damaged bases. Has a preference for oxidized purines, such as 7,8-dihydro-8-oxoguanine (8-oxoG). Has AP (apurinic/apyrimidinic) lyase activity and introduces nicks in the DNA strand. Cleaves the DNA backbone by beta-delta elimination to generate a single-strand break at the site of the removed base with both 3'- and 5'-phosphates. In Hahella chejuensis (strain KCTC 2396), this protein is Formamidopyrimidine-DNA glycosylase.